Here is a 109-residue protein sequence, read N- to C-terminus: Nucleoid-associated protein Bcer98_0019 (109 aa).

This sequence belongs to the YbaB/EbfC family. Homodimer.

The protein localises to the cytoplasm. Its subcellular location is the nucleoid. Its function is as follows. Binds to DNA and alters its conformation. May be involved in regulation of gene expression, nucleoid organization and DNA protection. This Bacillus cytotoxicus (strain DSM 22905 / CIP 110041 / 391-98 / NVH 391-98) protein is Nucleoid-associated protein Bcer98_0019.